The primary structure comprises 254 residues: 3-dehydroquinate dehydratase (254 aa).

3-dehydroquinate-binding positions include glutamate 47–arginine 49 and arginine 83. Histidine 144 acts as the Proton donor/acceptor in catalysis. Lysine 171 (schiff-base intermediate with substrate) is an active-site residue. 3-dehydroquinate contacts are provided by arginine 213, serine 232, and glutamine 236.

The protein belongs to the type-I 3-dehydroquinase family. Homodimer.

The enzyme catalyses 3-dehydroquinate = 3-dehydroshikimate + H2O. The protein operates within metabolic intermediate biosynthesis; chorismate biosynthesis; chorismate from D-erythrose 4-phosphate and phosphoenolpyruvate: step 3/7. In terms of biological role, involved in the third step of the chorismate pathway, which leads to the biosynthesis of aromatic amino acids. Catalyzes the cis-dehydration of 3-dehydroquinate (DHQ) and introduces the first double bond of the aromatic ring to yield 3-dehydroshikimate. This is 3-dehydroquinate dehydratase from Neisseria gonorrhoeae (strain ATCC 700825 / FA 1090).